We begin with the raw amino-acid sequence, 359 residues long: tRNA-specific 2-thiouridylase MnmA (359 aa).

Residues 11–18 and I37 each bind ATP; that span reads GISGGVDS. Residue C99 is the Nucleophile of the active site. C99 and C195 are disulfide-bonded. G123 provides a ligand contact to ATP. The segment at 145–147 is interaction with tRNA; that stretch reads KDQ. C195 (cysteine persulfide intermediate) is an active-site residue. Positions 304 to 305 are interaction with tRNA; the sequence is RY.

Belongs to the MnmA/TRMU family.

Its subcellular location is the cytoplasm. It carries out the reaction S-sulfanyl-L-cysteinyl-[protein] + uridine(34) in tRNA + AH2 + ATP = 2-thiouridine(34) in tRNA + L-cysteinyl-[protein] + A + AMP + diphosphate + H(+). Functionally, catalyzes the 2-thiolation of uridine at the wobble position (U34) of tRNA, leading to the formation of s(2)U34. In Chlorobium phaeobacteroides (strain BS1), this protein is tRNA-specific 2-thiouridylase MnmA.